Reading from the N-terminus, the 243-residue chain is MKNIRVTVEYDGTSFAGWQRQSGAIVTVQGEIEVALGKILQEKISLAAAGRTDKGVHARAQTANFFTASSLEPSRIVHSLNSLLPQTIRISNPEEVDADFHARHSAKERQYRYFLIEEPSAIYGRFAGCSFGKLDVAIMQQMAAILVGTHDFSAFSKEDRDNPGRICSVTACKWYPCKHYLVLRISADRFLRSMVRYLVDAMIRAGKGRLSVGDFCRMLETGVTTSQLNPALPAGLFLWDVLY.

Residue Asp-53 is the Nucleophile of the active site. Tyr-111 serves as a coordination point for substrate.

It belongs to the tRNA pseudouridine synthase TruA family. In terms of assembly, homodimer.

The catalysed reaction is uridine(38/39/40) in tRNA = pseudouridine(38/39/40) in tRNA. Formation of pseudouridine at positions 38, 39 and 40 in the anticodon stem and loop of transfer RNAs. This is tRNA pseudouridine synthase A from Pelodictyon phaeoclathratiforme (strain DSM 5477 / BU-1).